We begin with the raw amino-acid sequence, 124 residues long: Large ribosomal subunit protein bL12 (124 aa).

Belongs to the bacterial ribosomal protein bL12 family. Homodimer. Part of the ribosomal stalk of the 50S ribosomal subunit. Forms a multimeric L10(L12)X complex, where L10 forms an elongated spine to which 2 to 4 L12 dimers bind in a sequential fashion. Binds GTP-bound translation factors.

In terms of biological role, forms part of the ribosomal stalk which helps the ribosome interact with GTP-bound translation factors. Is thus essential for accurate translation. This Sulfurovum sp. (strain NBC37-1) protein is Large ribosomal subunit protein bL12.